A 190-amino-acid chain; its full sequence is Adenylate kinase (190 aa).

Glycine 12–threonine 17 contacts ATP. Positions serine 34 to valine 63 are NMP. AMP-binding positions include threonine 35, arginine 40, asparagine 61 to valine 63, glycine 88 to arginine 91, and glutamine 95. The interval glycine 130–aspartate 136 is LID. Arginine 131 is an ATP binding site. Residues arginine 133 and arginine 145 each coordinate AMP. Arginine 173 provides a ligand contact to ATP.

Belongs to the adenylate kinase family. In terms of assembly, monomer.

The protein localises to the cytoplasm. It catalyses the reaction AMP + ATP = 2 ADP. It functions in the pathway purine metabolism; AMP biosynthesis via salvage pathway; AMP from ADP: step 1/1. Its function is as follows. Catalyzes the reversible transfer of the terminal phosphate group between ATP and AMP. Plays an important role in cellular energy homeostasis and in adenine nucleotide metabolism. The chain is Adenylate kinase from Helicobacter hepaticus (strain ATCC 51449 / 3B1).